Consider the following 129-residue polypeptide: Small ribosomal subunit protein uS11 (129 aa).

It belongs to the universal ribosomal protein uS11 family. As to quaternary structure, part of the 30S ribosomal subunit. Interacts with proteins S7 and S18. Binds to IF-3.

Functionally, located on the platform of the 30S subunit, it bridges several disparate RNA helices of the 16S rRNA. Forms part of the Shine-Dalgarno cleft in the 70S ribosome. The polypeptide is Small ribosomal subunit protein uS11 (Thermosipho africanus (strain TCF52B)).